The primary structure comprises 303 residues: 4-hydroxy-tetrahydrodipicolinate synthase (303 aa).

Pyruvate is bound at residue T57. Y143 serves as the catalytic Proton donor/acceptor. The Schiff-base intermediate with substrate role is filled by K171. I211 is a pyruvate binding site.

It belongs to the DapA family. In terms of assembly, homotetramer; dimer of dimers.

It is found in the cytoplasm. It carries out the reaction L-aspartate 4-semialdehyde + pyruvate = (2S,4S)-4-hydroxy-2,3,4,5-tetrahydrodipicolinate + H2O + H(+). The protein operates within amino-acid biosynthesis; L-lysine biosynthesis via DAP pathway; (S)-tetrahydrodipicolinate from L-aspartate: step 3/4. Catalyzes the condensation of (S)-aspartate-beta-semialdehyde [(S)-ASA] and pyruvate to 4-hydroxy-tetrahydrodipicolinate (HTPA). This is 4-hydroxy-tetrahydrodipicolinate synthase from Bifidobacterium animalis subsp. lactis (strain AD011).